Here is a 236-residue protein sequence, read N- to C-terminus: Leucyl/phenylalanyl-tRNA--protein transferase (236 aa).

Belongs to the L/F-transferase family.

The protein resides in the cytoplasm. It catalyses the reaction N-terminal L-lysyl-[protein] + L-leucyl-tRNA(Leu) = N-terminal L-leucyl-L-lysyl-[protein] + tRNA(Leu) + H(+). The enzyme catalyses N-terminal L-arginyl-[protein] + L-leucyl-tRNA(Leu) = N-terminal L-leucyl-L-arginyl-[protein] + tRNA(Leu) + H(+). It carries out the reaction L-phenylalanyl-tRNA(Phe) + an N-terminal L-alpha-aminoacyl-[protein] = an N-terminal L-phenylalanyl-L-alpha-aminoacyl-[protein] + tRNA(Phe). Functionally, functions in the N-end rule pathway of protein degradation where it conjugates Leu, Phe and, less efficiently, Met from aminoacyl-tRNAs to the N-termini of proteins containing an N-terminal arginine or lysine. The sequence is that of Leucyl/phenylalanyl-tRNA--protein transferase from Yersinia enterocolitica serotype O:8 / biotype 1B (strain NCTC 13174 / 8081).